The following is a 186-amino-acid chain: Elongation factor P (186 aa).

The protein belongs to the elongation factor P family.

Its subcellular location is the cytoplasm. Its pathway is protein biosynthesis; polypeptide chain elongation. Its function is as follows. Involved in peptide bond synthesis. Stimulates efficient translation and peptide-bond synthesis on native or reconstituted 70S ribosomes in vitro. Probably functions indirectly by altering the affinity of the ribosome for aminoacyl-tRNA, thus increasing their reactivity as acceptors for peptidyl transferase. In Brucella canis (strain ATCC 23365 / NCTC 10854 / RM-666), this protein is Elongation factor P.